Here is a 1148-residue protein sequence, read N- to C-terminus: Replication factor C subunit 1 (1148 aa).

Residues 46–56 are compositionally biased toward basic and acidic residues; it reads NSSRKEDDFKQ. Disordered stretches follow at residues 46-201 and 228-380; these read NSSR…LNDE and TLAM…TNYQ. Lysine 50 participates in a covalent cross-link: Glycyl lysine isopeptide (Lys-Gly) (interchain with G-Cter in SUMO2). Residue tyrosine 67 is modified to Phosphotyrosine. A phosphoserine mark is found at serine 69, serine 71, serine 73, and serine 108. Threonine 110 carries the post-translational modification Phosphothreonine. Residues 130–141 are compositionally biased toward polar residues; the sequence is RSTNSHLGTSNM. Serine 156 is modified (phosphoserine). Threonine 161 and threonine 163 each carry phosphothreonine. Residues serine 164, serine 173, and serine 190 each carry the phosphoserine modification. A compositionally biased stretch (basic and acidic residues) spans 234 to 246; it reads EEPKTKKARKDTE. Serine 253 bears the Phosphoserine mark. Residues 262 to 271 show a composition bias toward basic residues; it reads EKHKYPHKVK. Phosphoserine occurs at positions 281 and 283. The segment covering 288 to 308 has biased composition (basic and acidic residues); the sequence is SKYESSKESQQHSKSSADKIG. Serine 312 is modified (phosphoserine). Basic and acidic residues-rich tracts occupy residues 323-353 and 362-376; these read KRKE…ETKT and AKKE…EKKR. Serine 368 carries the post-translational modification Phosphoserine. The 91-residue stretch at 402-492 folds into the BRCT domain; that stretch reads GAENCLEGLI…PGKKSKYEIA (91 aa). Composition is skewed to basic and acidic residues over residues 496-507 and 520-538; these read EMKKESKLERTP and SKKE…RDSL. A disordered region spans residues 496–538; the sequence is EMKKESKLERTPQKNVQGKRKISPSKKESESKKSRPTSKRDSL. Phosphoserine is present on serine 537. 650 to 657 serves as a coordination point for ATP; it reads SGPPGVGK. The disordered stretch occupies residues 1081 to 1148; that stretch reads KASRHSTSPS…RKGKGKSSKK (68 aa). Residues 1094–1105 show a composition bias toward acidic residues; the sequence is EYNEELNEDDSQ. Phosphoserine is present on residues serine 1104 and serine 1106. The short motif at 1120–1124 is the Nuclear localization signal element; the sequence is IKKKT. Over residues 1130-1140 the composition is skewed to basic and acidic residues; it reads SKPEKDKEPRK.

Belongs to the activator 1 large subunit family. As to quaternary structure, large subunit of the RFC complex, an heteropentameric complex consisting of RFC1 and four small subunits RFC2, RFC3, RFC4 and RFC5; the RFC complex interacts with PCNA and the interaction involves RFC1. Wide tissue distribution. Undetectable in placental tissue.

Its subcellular location is the nucleus. Subunit of the replication factor C (RFC) complex which acts during elongation of primed DNA templates by DNA polymerases delta and epsilon, and is necessary for ATP-dependent loading of proliferating cell nuclear antigen (PCNA) onto primed DNA. This subunit binds to the primer-template junction. Binds the PO-B transcription element as well as other GA rich DNA sequences. Can bind single- or double-stranded DNA. In Homo sapiens (Human), this protein is Replication factor C subunit 1 (RFC1).